The chain runs to 548 residues: 5-epi-aristolochene synthase 3 (548 aa).

Asp301, Asp305, Asp444, Thr448, and Glu452 together coordinate Mg(2+). The DDXXD motif motif lies at 301 to 305; that stretch reads DDTFD.

This sequence belongs to the terpene synthase family. As to quaternary structure, monomer. Requires Mg(2+) as cofactor. In terms of tissue distribution, expressed in roots, but not in shoots.

The protein localises to the cytoplasm. The enzyme catalyses (2E,6E)-farnesyl diphosphate = (+)-5-epi-aristolochene + diphosphate. Its pathway is secondary metabolite biosynthesis; terpenoid biosynthesis. In terms of biological role, catalyzes the cyclization of trans,trans-farnesyl diphosphate (FPP) to the bicyclic intermediate 5-epi-aristolochene, initial step in the conversion of FPP to the sesquiterpenoid antifungal phytoalexin capsidiol. Produces germacrene A as an enzyme-bound intermediate that is not released by the enzyme, but is further cyclized to produce the bicyclic 5-epi-aristolochene. This Nicotiana attenuata (Coyote tobacco) protein is 5-epi-aristolochene synthase 3.